We begin with the raw amino-acid sequence, 1195 residues long: Probable beta-tubulin polyglutamylase (1195 aa).

The disordered stretch occupies residues 1–110; that stretch reads MSQKDIYNKY…QTEMTDNQNE (110 aa). Acidic residues-rich tracts occupy residues 17–27 and 44–79; these read DQQEEDDDENQ and QGEDLDEDQGVIGEDDEEQEESYDEEDEEEDDEENN. Coiled coils occupy residues 59–103 and 144–260; these read DEEQ…QQTE and QDMD…QSEQ. The segment covering 80 to 89 has biased composition (low complexity); that stretch reads QDQQNNSESN. A compositionally biased stretch (polar residues) spans 90–110; sequence LQYDKTNQKNQQTEMTDNQNE. The segment at 281–343 is disordered; the sequence is PKNDVDQYTG…NKKEQAKKQQ (63 aa). Over residues 294-316 the composition is skewed to acidic residues; that stretch reads DSGESDEEANNEDDDEDEDDESE. The segment covering 322-334 has biased composition (basic residues); the sequence is RKNKAQLLKKKNN. Residues 350–703 enclose the TTL domain; that stretch reads KQTLVLNVAD…TCKAKNEIIN (354 aa). Residues 500–503, lysine 513, and aspartate 515 contribute to the ATP site; that span reads QRYL. The c-MTBD region stretch occupies residues 674–756; that stretch reads PLDSYIKKNT…GFERIFPMED (83 aa). Residues 783-862 form a disordered region; the sequence is RNTKKVTEDP…ETIQCEDQEQ (80 aa). The segment covering 825–849 has biased composition (polar residues); that stretch reads PNSQTTINKGIPGQNGQRPSSSQLN. Over residues 850 to 860 the composition is skewed to acidic residues; sequence EEGETIQCEDQ.

Its subcellular location is the cytoplasm. The protein localises to the cytoskeleton. The protein resides in the cell projection. It localises to the cilium. It is found in the cilium basal body. Its function is as follows. Probable tubulin polyglutamylase with a strong preference for beta-tubulin. This chain is Probable beta-tubulin polyglutamylase (Ttll6a), found in Tetrahymena thermophila (strain SB210).